Here is a 222-residue protein sequence, read N- to C-terminus: Putative ankyrin repeat protein L36 (222 aa).

7 ANK repeats span residues Met-1–Ala-14, Gln-15–Ala-44, Asn-45–Ala-74, Glu-76–Glu-104, Tyr-105–Asp-134, Ala-136–Cys-161, and Ser-163–Lys-191.

This chain is Putative ankyrin repeat protein L36, found in Acanthamoeba polyphaga (Amoeba).